Reading from the N-terminus, the 146-residue chain is Acidic phospholipase A2 D (146 aa).

The first 21 residues, methionine 1–serine 21, serve as a signal peptide directing secretion. The propeptide occupies asparagine 22–leucine 27. Cystine bridges form between cysteine 38–cysteine 98, cysteine 53–cysteine 145, cysteine 55–cysteine 71, cysteine 70–cysteine 126, cysteine 77–cysteine 119, cysteine 87–cysteine 112, and cysteine 105–cysteine 117. Ca(2+)-binding residues include tyrosine 54, glycine 56, and glycine 58. Histidine 74 is a catalytic residue. Aspartate 75 lines the Ca(2+) pocket. Aspartate 120 is a catalytic residue.

The protein belongs to the phospholipase A2 family. Group I subfamily. D49 sub-subfamily. It depends on Ca(2+) as a cofactor. Expressed by the venom gland.

It localises to the secreted. It catalyses the reaction a 1,2-diacyl-sn-glycero-3-phosphocholine + H2O = a 1-acyl-sn-glycero-3-phosphocholine + a fatty acid + H(+). Its function is as follows. PLA2 catalyzes the calcium-dependent hydrolysis of the 2-acyl groups in 3-sn-phosphoglycerides. In Naja sputatrix (Malayan spitting cobra), this protein is Acidic phospholipase A2 D.